The chain runs to 115 residues: U3-lycotoxin-Ls1r (115 aa).

The N-terminal stretch at 1–20 (MKFVLLFGVLLVTLFSYSSA) is a signal peptide. A propeptide spanning residues 21–44 (EMLDDFHQADEDELVSLIKKEEAR) is cleaved from the precursor. 4 cysteine pairs are disulfide-bonded: Cys-48/Cys-63, Cys-55/Cys-72, Cys-62/Cys-87, and Cys-74/Cys-85.

The protein belongs to the neurotoxin 19 (CSTX) family. 01 subfamily. Expressed by the venom gland.

The protein localises to the secreted. The protein is U3-lycotoxin-Ls1r of Lycosa singoriensis (Wolf spider).